The primary structure comprises 167 residues: Insertion element IS1 1 protein InsB (167 aa).

The protein belongs to the transposase 27 family.

Functionally, absolutely required for transposition of IS1. The chain is Insertion element IS1 1 protein InsB (insB1) from Escherichia coli (strain K12).